Reading from the N-terminus, the 289-residue chain is Tachykinins (289 aa).

Positions 1–24 (MRSQGGSFAVALLLLLLLTAAATA) are cleaved as a signal peptide. Residues 25 to 49 (ADAEPDVESSVSTLPPGADAPRRMV) constitute a propeptide that is removed on maturation. The segment at 28–80 (EPDVESSVSTLPPGADAPRRMVKRAPTSSFIGMRGKKEDEKDQRAADWMGPDP) is disordered. Arg-61 carries the post-translational modification Arginine amide. Basic and acidic residues predominate over residues 62-72 (GKKEDEKDQRA). Residue Asn-95 is modified to Asparagine amide. Arginine amide is present on Arg-110. Val-155 carries the valine amide modification. Residues 156 to 175 (GKRAPTGFTGMRGKRPMSGD) form a disordered region. 4 positions are modified to arginine amide: Arg-167, Arg-198, Arg-237, and Arg-281. Residues 285–289 (PALAE) constitute a propeptide that is removed on maturation.

This sequence belongs to the tachykinin family.

The protein localises to the secreted. Tachykinins are active peptides which excite neurons, evoke behavioral responses, are potent vasodilators and secretagogues, and contract (directly or indirectly) many smooth muscles. Stimulates gut muscle contractions. The protein is Tachykinins of Drosophila pseudoobscura pseudoobscura (Fruit fly).